We begin with the raw amino-acid sequence, 415 residues long: Putative serine/threonine-protein phosphatase 4 regulatory subunit 1-like (415 aa).

HEAT repeat units follow at residues 86–124 (VMEI…SNFP), 163–202 (LLPR…TEKF), 203–241 (LIPK…RRTQ), and 242–280 (LFPL…RAGL). The span at 301 to 318 (FASGSPAPSSGGNTSPAS) shows a compositional bias: low complexity. A disordered region spans residues 301–362 (FASGSPAPSS…GPAESPVESC (62 aa)).

May be a regulatory subunit of serine/threonine-protein phosphatase 4. The protein is Putative serine/threonine-protein phosphatase 4 regulatory subunit 1-like (PPP4R1L) of Homo sapiens (Human).